Reading from the N-terminus, the 777-residue chain is Endonuclease MutS2 (777 aa).

328–335 (GPNTGGKT) is an ATP binding site. Positions 702-777 (LDLRGKRYEE…GSGATIVIFK (76 aa)) constitute a Smr domain.

This sequence belongs to the DNA mismatch repair MutS family. MutS2 subfamily. In terms of assembly, homodimer. Binds to stalled ribosomes, contacting rRNA.

Endonuclease that is involved in the suppression of homologous recombination and thus may have a key role in the control of bacterial genetic diversity. Functionally, acts as a ribosome collision sensor, splitting the ribosome into its 2 subunits. Detects stalled/collided 70S ribosomes which it binds and splits by an ATP-hydrolysis driven conformational change. Acts upstream of the ribosome quality control system (RQC), a ribosome-associated complex that mediates the extraction of incompletely synthesized nascent chains from stalled ribosomes and their subsequent degradation. Probably generates substrates for RQC. The chain is Endonuclease MutS2 from Streptococcus sanguinis (strain SK36).